We begin with the raw amino-acid sequence, 286 residues long: 4-diphosphocytidyl-2-C-methyl-D-erythritol kinase (286 aa).

Residue Lys8 is part of the active site. Position 92–102 (92–102 (PVSAGLAGGST)) interacts with ATP. Asp134 is a catalytic residue.

It belongs to the GHMP kinase family. IspE subfamily.

It catalyses the reaction 4-CDP-2-C-methyl-D-erythritol + ATP = 4-CDP-2-C-methyl-D-erythritol 2-phosphate + ADP + H(+). It participates in isoprenoid biosynthesis; isopentenyl diphosphate biosynthesis via DXP pathway; isopentenyl diphosphate from 1-deoxy-D-xylulose 5-phosphate: step 3/6. Catalyzes the phosphorylation of the position 2 hydroxy group of 4-diphosphocytidyl-2C-methyl-D-erythritol. The sequence is that of 4-diphosphocytidyl-2-C-methyl-D-erythritol kinase from Caldicellulosiruptor bescii (strain ATCC BAA-1888 / DSM 6725 / KCTC 15123 / Z-1320) (Anaerocellum thermophilum).